We begin with the raw amino-acid sequence, 170 residues long: Peptide methionine sulfoxide reductase MsrA (170 aa).

Cys13 is an active-site residue.

This sequence belongs to the MsrA Met sulfoxide reductase family.

It catalyses the reaction L-methionyl-[protein] + [thioredoxin]-disulfide + H2O = L-methionyl-(S)-S-oxide-[protein] + [thioredoxin]-dithiol. The catalysed reaction is [thioredoxin]-disulfide + L-methionine + H2O = L-methionine (S)-S-oxide + [thioredoxin]-dithiol. Its function is as follows. Has an important function as a repair enzyme for proteins that have been inactivated by oxidation. Catalyzes the reversible oxidation-reduction of methionine sulfoxide in proteins to methionine. This chain is Peptide methionine sulfoxide reductase MsrA, found in Nocardia farcinica (strain IFM 10152).